The primary structure comprises 557 residues: Dihydroxy-acid dehydratase (557 aa).

Residue C47 coordinates [2Fe-2S] cluster. A Mg(2+)-binding site is contributed by D79. C120 is a binding site for [2Fe-2S] cluster. D121 and K122 together coordinate Mg(2+). N6-carboxylysine is present on K122. C192 provides a ligand contact to [2Fe-2S] cluster. E444 is a binding site for Mg(2+). Residue S470 is the Proton acceptor of the active site.

It belongs to the IlvD/Edd family. In terms of assembly, homodimer. [2Fe-2S] cluster serves as cofactor. It depends on Mg(2+) as a cofactor.

It carries out the reaction (2R)-2,3-dihydroxy-3-methylbutanoate = 3-methyl-2-oxobutanoate + H2O. The catalysed reaction is (2R,3R)-2,3-dihydroxy-3-methylpentanoate = (S)-3-methyl-2-oxopentanoate + H2O. It functions in the pathway amino-acid biosynthesis; L-isoleucine biosynthesis; L-isoleucine from 2-oxobutanoate: step 3/4. The protein operates within amino-acid biosynthesis; L-valine biosynthesis; L-valine from pyruvate: step 3/4. Functionally, functions in the biosynthesis of branched-chain amino acids. Catalyzes the dehydration of (2R,3R)-2,3-dihydroxy-3-methylpentanoate (2,3-dihydroxy-3-methylvalerate) into 2-oxo-3-methylpentanoate (2-oxo-3-methylvalerate) and of (2R)-2,3-dihydroxy-3-methylbutanoate (2,3-dihydroxyisovalerate) into 2-oxo-3-methylbutanoate (2-oxoisovalerate), the penultimate precursor to L-isoleucine and L-valine, respectively. This chain is Dihydroxy-acid dehydratase, found in Synechococcus sp. (strain CC9902).